The following is a 103-amino-acid chain: Putative septation protein SpoVG (103 aa).

The protein belongs to the SpoVG family.

Could be involved in septation. This Exiguobacterium sibiricum (strain DSM 17290 / CCUG 55495 / CIP 109462 / JCM 13490 / 255-15) protein is Putative septation protein SpoVG.